Reading from the N-terminus, the 297-residue chain is Transcription factor bHLH129 (297 aa).

Residues 1-145 (MYPPNSSKST…SSSHQEHNSL (145 aa)) form a disordered region. Residue Ser35 is modified to Phosphoserine. Low complexity predominate over residues 68–82 (SSIGFDSNASSSSSL). Over residues 111–121 (PNGGYGGGGEQ) the composition is skewed to gly residues. Ser138 is subject to Phosphoserine. Residues 239 to 289 (FATHPRSIAERERRTRISGKLKKLQELVPNMDKQTSYADMLDLAVEHIKGL) form the bHLH domain.

As to quaternary structure, homodimer.

It is found in the nucleus. This is Transcription factor bHLH129 (BHLH129) from Arabidopsis thaliana (Mouse-ear cress).